Consider the following 397-residue polypeptide: MKKQILQLNLEQTSSAAAEDTNLDCSLAGYDYVLPPERIAQNPAVPRDSSRLLVVNSQTTGKETPPLHQIFRDLPDILRPGDLLIMNNTKVIPARLYGRKSSGAEVEILLLEERKFNCWLALVKPGKRFKKGTQIIFEGLGMRNLGIENSPQYSVASPHQLTATVLETDKATGGRLLQFDLPEGQSLVQLLDKFGEIPLPPYITTSQAADEQYQTVYAEEPGAIAAPTAGLHFTPELLQKLRDRNINQAFITLHVGVGTFRPVEVEDVATHQMHEEWIEVPAATVAQIKATKAAGGRIIAVGTTVVRALEGAAASGNLQEFCGKTNLFIYPGYKWQVVEGLITNFHLPRSSLLMLVSALIGRERLLNIYQEAIASQYRFYSFGDAMLILPEARGVEQ.

It belongs to the QueA family. In terms of assembly, monomer.

It is found in the cytoplasm. The enzyme catalyses 7-aminomethyl-7-carbaguanosine(34) in tRNA + S-adenosyl-L-methionine = epoxyqueuosine(34) in tRNA + adenine + L-methionine + 2 H(+). Its pathway is tRNA modification; tRNA-queuosine biosynthesis. In terms of biological role, transfers and isomerizes the ribose moiety from AdoMet to the 7-aminomethyl group of 7-deazaguanine (preQ1-tRNA) to give epoxyqueuosine (oQ-tRNA). In Nostoc sp. (strain PCC 7120 / SAG 25.82 / UTEX 2576), this protein is S-adenosylmethionine:tRNA ribosyltransferase-isomerase.